A 188-amino-acid polypeptide reads, in one-letter code: Peptidyl-tRNA hydrolase (188 aa).

Position 16 (tyrosine 16) interacts with tRNA. The active-site Proton acceptor is the histidine 21. The tRNA site is built by phenylalanine 66, asparagine 68, and asparagine 114.

Belongs to the PTH family. In terms of assembly, monomer.

The protein resides in the cytoplasm. The catalysed reaction is an N-acyl-L-alpha-aminoacyl-tRNA + H2O = an N-acyl-L-amino acid + a tRNA + H(+). In terms of biological role, hydrolyzes ribosome-free peptidyl-tRNAs (with 1 or more amino acids incorporated), which drop off the ribosome during protein synthesis, or as a result of ribosome stalling. Catalyzes the release of premature peptidyl moieties from peptidyl-tRNA molecules trapped in stalled 50S ribosomal subunits, and thus maintains levels of free tRNAs and 50S ribosomes. The protein is Peptidyl-tRNA hydrolase of Geobacter sp. (strain M21).